Consider the following 372-residue polypeptide: MKKKDYYEVLGVSKTASEQEIRQAYRKLAKQYHPDLNKSPDAHDKMVEINEAADVLLDKDKRKQYDQFGHNAFDGSSGFSSNFADFEDLFSNMGSSGFSSFTNIFSDFFGSNKSDYQRSTKGQSVSVDIYLTFKELLFGVDKIIELDLLTNCSVCFGSGAESNSDISICNNCHGTGEVLIQKNMGFFQFQQSAKCNVCNGAGKIIKNKCKNCKGKGKYLERKKIEVNIPKGIRPNQQIKLSQKGHASINNGVNGDLIIDIYLKESKVFEIVNNNDILMTYNISYLDAILGNEIIIKTLDGDIKYKLPKSINSNEFIIINNKGLYKSINKDKRGDLIIKVNIVVPKNLNKKEKELIEQIYEQTSFNPENNIDQ.

One can recognise a J domain in the interval 5–69 (DYYEVLGVSK…DKRKQYDQFG (65 aa)). A CR-type zinc finger spans residues 139–221 (GVDKIIELDL…CKGKGKYLER (83 aa)). Cys-152, Cys-155, Cys-169, Cys-172, Cys-195, Cys-198, Cys-209, and Cys-212 together coordinate Zn(2+). CXXCXGXG motif repeat units lie at residues 152–159 (CSVCFGSG), 169–176 (CNNCHGTG), 195–202 (CNVCNGAG), and 209–216 (CKNCKGKG).

This sequence belongs to the DnaJ family. In terms of assembly, homodimer. Zn(2+) serves as cofactor.

The protein resides in the cytoplasm. Participates actively in the response to hyperosmotic and heat shock by preventing the aggregation of stress-denatured proteins and by disaggregating proteins, also in an autonomous, DnaK-independent fashion. Unfolded proteins bind initially to DnaJ; upon interaction with the DnaJ-bound protein, DnaK hydrolyzes its bound ATP, resulting in the formation of a stable complex. GrpE releases ADP from DnaK; ATP binding to DnaK triggers the release of the substrate protein, thus completing the reaction cycle. Several rounds of ATP-dependent interactions between DnaJ, DnaK and GrpE are required for fully efficient folding. Also involved, together with DnaK and GrpE, in the DNA replication of plasmids through activation of initiation proteins. The polypeptide is Chaperone protein DnaJ (Mycoplasma mycoides subsp. mycoides SC (strain CCUG 32753 / NCTC 10114 / PG1)).